The sequence spans 354 residues: HRDYEIVLEGGSSSWGKVKARAKVNVPPASPLLPADCNVKLNVKPLDPAKGFVRISAVFESIVDSTKNKLTIEADIANETKERRISVGEGMVSVGGFSHSFSFEGSVVNMFYYRSDAVRRNVPNPIYRQGRQFHDILMKVPLDNNDLIDTWEGTVRAIGSTGTFNDWIRDFWFIGPAFTALNEGGQRISRIEVNGLNTESGPKGPVGVSRWRFSHGGSGMVDSISRWAELFPFDKLNRPAQVEAGFRSDSQGIEVKVDGEFPGVSVDAGGGLRRILNHPLIPLVHHGMVGKFNNFNVDAQLKVVLPKGYKVRYAAPQYRSQNLEEYRWSGGAYARWVEHVCKGGVGQFEVLYAQ.

Residues H99, H134, H278, H285, and H286 each coordinate bacteriochlorophyll a.

As to quaternary structure, homotrimer. Each subunit contains 7 molecules of bacteriochlorophyll a.

In terms of biological role, intermediary in the transfer of excitation energy from the chlorophyll to the reaction centers. The chain is Bacteriochlorophyll a protein (fmoA) from Chlorobaculum thiosulfatiphilum (Chlorobium limicola f.sp. thiosulfatophilum).